The primary structure comprises 600 residues: Proline--tRNA ligase (600 aa).

Belongs to the class-II aminoacyl-tRNA synthetase family. ProS type 1 subfamily. Homodimer.

Its subcellular location is the cytoplasm. The catalysed reaction is tRNA(Pro) + L-proline + ATP = L-prolyl-tRNA(Pro) + AMP + diphosphate. Its function is as follows. Catalyzes the attachment of proline to tRNA(Pro) in a two-step reaction: proline is first activated by ATP to form Pro-AMP and then transferred to the acceptor end of tRNA(Pro). As ProRS can inadvertently accommodate and process non-cognate amino acids such as alanine and cysteine, to avoid such errors it has two additional distinct editing activities against alanine. One activity is designated as 'pretransfer' editing and involves the tRNA(Pro)-independent hydrolysis of activated Ala-AMP. The other activity is designated 'posttransfer' editing and involves deacylation of mischarged Ala-tRNA(Pro). The misacylated Cys-tRNA(Pro) is not edited by ProRS. This Gloeothece citriformis (strain PCC 7424) (Cyanothece sp. (strain PCC 7424)) protein is Proline--tRNA ligase.